The primary structure comprises 293 residues: SAGA-associated factor 29 (293 aa).

Positions 3 to 86 form a coiled coil; sequence LVSADSRIAE…LRKALDKIAE (84 aa). The SGF29 C-terminal domain occupies 152–293; that stretch reads GDYVAKPGDK…VVACKEPKKK (142 aa). 2 histone H3K4me3 N-terminus binding regions span residues 194–196 and 240–243; these read DID and QTTC. The histone H3K4me3 binding stretch occupies residues 264 to 266; it reads FED. Lys-288 carries the post-translational modification N6-acetyllysine.

It belongs to the SGF29 family. As to quaternary structure, interacts with dimethylated and trimethylated 'Lys-4' of histone H3 (H3K4me2 and H3K4me3), with a preference for the trimethylated form (H3K4me3). Component of some SAGA-type complexes. Component of the ADA2A-containing complex (ATAC), composed of KAT14, KAT2A, TADA2L, TADA3L, ZZ3, MBIP, WDR5, YEATS2, CCDC101 and DR1. Interacts with (methylated) CGAS. Interacts with TADA3L, GCN5L2, SUPT3H and MYC.

The protein localises to the nucleus. In terms of biological role, chromatin reader component of some histone acetyltransferase (HAT) SAGA-type complexes like the TFTC-HAT, ATAC or STAGA complexes. SGF29 specifically recognizes and binds methylated 'Lys-4' of histone H3 (H3K4me), with a preference for trimethylated form (H3K4me3). In the SAGA-type complexes, SGF29 is required to recruit complexes to H3K4me. Involved in the response to endoplasmic reticulum (ER) stress by recruiting the SAGA complex to H3K4me, thereby promoting histone H3 acetylation and cell survival. Also binds non-histone proteins that are methylated on Lys residues: specifically recognizes and binds CGAS monomethylated on 'Lys-491'. In Mus musculus (Mouse), this protein is SAGA-associated factor 29.